The chain runs to 458 residues: Fumarate hydratase class II 2 (458 aa).

Substrate-binding positions include 98 to 100 (SGT), 123 to 126 (NPND), 133 to 135 (SSN), and Thr-181. The active-site Proton donor/acceptor is His-182. Residue Ser-312 is part of the active site. Residues Ser-313 and 318 to 320 (KVN) each bind substrate.

It belongs to the class-II fumarase/aspartase family. Fumarase subfamily. Homotetramer.

It is found in the cytoplasm. It carries out the reaction (S)-malate = fumarate + H2O. Its pathway is carbohydrate metabolism; tricarboxylic acid cycle; (S)-malate from fumarate: step 1/1. In terms of biological role, involved in the TCA cycle. Catalyzes the stereospecific interconversion of fumarate to L-malate. The protein is Fumarate hydratase class II 2 of Pseudomonas aeruginosa (strain ATCC 15692 / DSM 22644 / CIP 104116 / JCM 14847 / LMG 12228 / 1C / PRS 101 / PAO1).